Reading from the N-terminus, the 269-residue chain is Phosphonates import ATP-binding protein PhnC (269 aa).

Residues 8–251 form the ABC transporter domain; that stretch reads IHLYGASLRH…LLDALYANEQ (244 aa). 40–47 contacts ATP; it reads GPSGAGKS.

Belongs to the ABC transporter superfamily. Phosphonates importer (TC 3.A.1.9.1) family. As to quaternary structure, the complex is composed of two ATP-binding proteins (PhnC), two transmembrane proteins (PhnE) and a solute-binding protein (PhnD).

It localises to the cell inner membrane. The catalysed reaction is phosphonate(out) + ATP + H2O = phosphonate(in) + ADP + phosphate + H(+). Its function is as follows. Part of the ABC transporter complex PhnCDE involved in phosphonates import. Responsible for energy coupling to the transport system. The protein is Phosphonates import ATP-binding protein PhnC of Pseudomonas putida (strain ATCC 47054 / DSM 6125 / CFBP 8728 / NCIMB 11950 / KT2440).